Consider the following 308-residue polypeptide: Transmembrane and ubiquitin-like domain-containing protein 1 (308 aa).

The helical transmembrane segment at 11 to 31 (VTVLFALVLFFMVLMLAWVST) threads the bilayer. The disordered stretch occupies residues 39–162 (THWIRPEPAQ…GLGDGTTAQS (124 aa)). The segment covering 63-93 (PSQTLTNADPNSETVDSSDSTQSSREFQNAG) has biased composition (polar residues). Positions 103–115 (SSSGSTVSTGGSV) are enriched in low complexity. The span at 132–149 (PNFTVSSRDPQAGASSSL) shows a compositional bias: polar residues. The region spanning 169–242 (IHLRLKFLND…LHCHISQHAS (74 aa)) is the Ubiquitin-like domain. 2 helical membrane passes run 253–273 (VPLNVGNLLVPLLFLIVMLLW) and 283–303 (FTGTATACLGGFTLLISAIAF).

The protein resides in the membrane. The protein localises to the cytoplasm. It is found in the nucleus. Functionally, may contribute to the regulation of translation during cell-cycle progression. May contribute to the regulation of cell proliferation. The membrane form is involved in sterol-regulated ubiquitination and degradation of HMG-CoA reductase HMGCR. May be involved in centrosome assembly. In Xenopus laevis (African clawed frog), this protein is Transmembrane and ubiquitin-like domain-containing protein 1 (tmub1).